The sequence spans 1429 residues: Inactive rhomboid protein 1 (1429 aa).

Disordered stretches follow at residues 1–36 (MSSNGSDLGHNNRRNEKGNPDSVHSSMRGSMSSTRR), 560–579 (GNEDAGQSNGTNGNYAPDRP), and 740–766 (TSALNSGGNATSDINLTGDQSSHQPGA). Residues 1–843 (MSSNGSDLGH…RPFFTYWINT (843 aa)) lie on the Cytoplasmic side of the membrane. Low complexity predominate over residues 22-33 (SVHSSMRGSMSS). 2 stretches are compositionally biased toward polar residues: residues 564 to 573 (AGQSNGTNGN) and 740 to 763 (TSALNSGGNATSDINLTGDQSSHQ). A helical transmembrane segment spans residues 844 to 864 (VQVVVLILSIICYGIAPIGIG). Residues 865-1099 (SEQKTGQVLV…PDQLYRLLTS (235 aa)) lie on the Lumenal side of the membrane. A helical transmembrane segment spans residues 1100–1120 (LCMHAGILHLAITLIFQHLFL). Topologically, residues 1121–1131 (ADLERLIGTVR) are cytoplasmic. The chain crosses the membrane as a helical span at residues 1132-1152 (TAIVYIMSGFAGNLTSAILVP). At 1153 to 1156 (HRPE) the chain is on the lumenal side. Residues 1157–1177 (VGPSASLSGVVASLIALLVWM) form a helical membrane-spanning segment. The Cytoplasmic segment spans residues 1178–1186 (HWKYLHKPH). A helical membrane pass occupies residues 1187-1207 (IALFKLLLLCSVLVGIGTLPY). Topologically, residues 1208–1210 (QLN) are lumenal. A helical membrane pass occupies residues 1211 to 1231 (FLGLLAGVICGCLLTMSLVPF). At 1232–1245 (TTFSKYGRKKKINL) the chain is on the cytoplasmic side. Residues 1246–1266 (IWTCVLFHVVVYTAMIVTFYI) traverse the membrane as a helical segment. At 1267–1429 (HPSEFHSISF…INNNTEFNVL (163 aa)) the chain is on the lumenal side.

It belongs to the peptidase S54 family. As to expression, specifically expressed in the nervous system and in brain.

The protein localises to the endoplasmic reticulum membrane. Rhomboid protease-like protein which has no protease activity but regulates the secretion of several ligands of the epidermal growth factor receptor. Indirectly activates the epidermal growth factor receptor signaling pathway and may thereby regulate sleep, cell survival, proliferation and migration. The polypeptide is Inactive rhomboid protein 1 (rho-5) (Drosophila melanogaster (Fruit fly)).